The chain runs to 134 residues: DNA-directed RNA polymerase subunit omega (134 aa).

The segment at Glu76 to Asp102 is disordered.

This sequence belongs to the RNA polymerase subunit omega family. The RNAP catalytic core consists of 2 alpha, 1 beta, 1 beta' and 1 omega subunit. When a sigma factor is associated with the core the holoenzyme is formed, which can initiate transcription.

It carries out the reaction RNA(n) + a ribonucleoside 5'-triphosphate = RNA(n+1) + diphosphate. Promotes RNA polymerase assembly. Latches the N- and C-terminal regions of the beta' subunit thereby facilitating its interaction with the beta and alpha subunits. The sequence is that of DNA-directed RNA polymerase subunit omega from Rhizobium etli (strain ATCC 51251 / DSM 11541 / JCM 21823 / NBRC 15573 / CFN 42).